The following is an 827-amino-acid chain: Protein arginine N-methyltransferase 9 (827 aa).

2 TPR repeats span residues 54–87 and 88–121; these read QYSLFKWAEELYALNRSQDLFNCYEQALELFPID and DVICNSMGEHLFRLGFRDEAAGYFYKALKLNPSS. SAM-dependent MTase PRMT-type domains are found at residues 124–453 and 511–827; these read AKEN…YLRL and NAVY…RPLQ.

Belongs to the class I-like SAM-binding methyltransferase superfamily. Protein arginine N-methyltransferase family.

Its subcellular location is the cytoplasm. It carries out the reaction L-arginyl-[protein] + 2 S-adenosyl-L-methionine = N(omega),N(omega)'-dimethyl-L-arginyl-[protein] + 2 S-adenosyl-L-homocysteine + 2 H(+). Functionally, arginine methyltransferase that can both catalyze the formation of omega-N monomethylarginine (MMA) and symmetrical dimethylarginine (sDMA). In Xenopus laevis (African clawed frog), this protein is Protein arginine N-methyltransferase 9 (prmt9).